The primary structure comprises 240 residues: Protein GUCD1 (240 aa).

This chain is Protein GUCD1 (GUCD1), found in Homo sapiens (Human).